The chain runs to 303 residues: Sulfate adenylyltransferase subunit 2 (303 aa).

This sequence belongs to the PAPS reductase family. CysD subfamily. As to quaternary structure, heterodimer composed of CysD, the smaller subunit, and CysN.

The enzyme catalyses sulfate + ATP + H(+) = adenosine 5'-phosphosulfate + diphosphate. It functions in the pathway sulfur metabolism; hydrogen sulfide biosynthesis; sulfite from sulfate: step 1/3. With CysN forms the ATP sulfurylase (ATPS) that catalyzes the adenylation of sulfate producing adenosine 5'-phosphosulfate (APS) and diphosphate, the first enzymatic step in sulfur assimilation pathway. APS synthesis involves the formation of a high-energy phosphoric-sulfuric acid anhydride bond driven by GTP hydrolysis by CysN coupled to ATP hydrolysis by CysD. The polypeptide is Sulfate adenylyltransferase subunit 2 (Aliarcobacter butzleri (strain RM4018) (Arcobacter butzleri)).